A 221-amino-acid chain; its full sequence is MKQERYSVLSLNLGKPQTLEYDGKKIETGIMKRPAKSAVMLYRENFEGDGQADLVNHGGPDKAVCVYPAEHYPFWEEFLSRPLSNAAFGENLTVAGLTEENVCIGDVFRLDEAVVQVSQPRQPCVKLAKKFGVKEMVLKVQQTGYTGFYFRVLEEGRVSPGANLELLSRGEKGISVQFANRINYHDAKNLTAIERILSEAALSESWRASFMKKKDRLLPVE.

The 135-residue stretch at 33 to 167 (RPAKSAVMLY…VSPGANLELL (135 aa)) folds into the MOSC domain.

This is an uncharacterized protein from Bacillus subtilis (strain 168).